Consider the following 313-residue polypeptide: HPr kinase/phosphorylase (313 aa).

Residues H141 and K162 contribute to the active site. 156–163 is a binding site for ATP; it reads GKSGIGKS. S163 contacts Mg(2+). D180 acts as the Proton acceptor; for phosphorylation activity. Proton donor; for dephosphorylation activity in catalysis. The interval 203–212 is important for the catalytic mechanism of both phosphorylation and dephosphorylation; it reads IEIRGIGIFD. A Mg(2+)-binding site is contributed by E204. R247 is a catalytic residue. The tract at residues 268 to 273 is important for the catalytic mechanism of dephosphorylation; the sequence is PVSAGR.

The protein belongs to the HPrK/P family. As to quaternary structure, homohexamer. Requires Mg(2+) as cofactor.

The catalysed reaction is [HPr protein]-L-serine + ATP = [HPr protein]-O-phospho-L-serine + ADP + H(+). It catalyses the reaction [HPr protein]-O-phospho-L-serine + phosphate + H(+) = [HPr protein]-L-serine + diphosphate. In terms of biological role, catalyzes the ATP- as well as the pyrophosphate-dependent phosphorylation of a specific serine residue in HPr, a phosphocarrier protein of the phosphoenolpyruvate-dependent sugar phosphotransferase system (PTS). HprK/P also catalyzes the pyrophosphate-producing, inorganic phosphate-dependent dephosphorylation (phosphorolysis) of seryl-phosphorylated HPr (P-Ser-HPr). The two antagonistic activities of HprK/P are regulated by several intracellular metabolites, which change their concentration in response to the absence or presence of rapidly metabolisable carbon sources (glucose, fructose, etc.) in the growth medium. Therefore, by controlling the phosphorylation state of HPr, HPrK/P is a sensor enzyme that plays a major role in the regulation of carbon metabolism and sugar transport: it mediates carbon catabolite repression (CCR), and regulates PTS-catalyzed carbohydrate uptake and inducer exclusion. This is HPr kinase/phosphorylase from Mycoplasma mycoides subsp. mycoides SC (strain CCUG 32753 / NCTC 10114 / PG1).